A 431-amino-acid polypeptide reads, in one-letter code: uncharacterized protein (431 aa).

Disordered regions lie at residues 31-55, 257-291, and 365-431; these read VPAS…QAGV, QNGG…PKQD, and FQSP…HRKA. The segment covering 42 to 55 has biased composition (polar residues); it reads VSASQPNGAHQAGV. A compositionally biased stretch (basic and acidic residues) spans 412-425; sequence VEYRRGRSLRESRE.

This is an uncharacterized protein from Arabidopsis thaliana (Mouse-ear cress).